We begin with the raw amino-acid sequence, 67 residues long: Probable Sec-independent protein translocase protein TatE (67 aa).

Residues 1–21 traverse the membrane as a helical segment; that stretch reads MEGISIAKLLIIGALIVLLFG. The tract at residues 46–67 is disordered; sequence EDTSATRTTAEDVPAERVVHKD.

The protein belongs to the TatA/E family. TatE subfamily.

It is found in the cell inner membrane. Functionally, part of the twin-arginine translocation (Tat) system that transports large folded proteins containing a characteristic twin-arginine motif in their signal peptide across membranes. TatE shares overlapping functions with TatA. In Pantoea vagans (strain C9-1) (Pantoea agglomerans (strain C9-1)), this protein is Probable Sec-independent protein translocase protein TatE.